Reading from the N-terminus, the 280-residue chain is Probable formate transporter (280 aa).

The next 6 membrane-spanning stretches (helical) occupy residues 33-49 (LSFV…LLAE), 67-83 (LVFG…VVIA), 116-133 (SWVF…VLAY), 177-195 (FWRA…YLAV), 204-219 (SFGI…CIGF), and 253-272 (LGNI…FTYL).

This sequence belongs to the FNT transporter (TC 1.A.16) family.

The protein resides in the cell membrane. May act as a formate transporter. In Methanobacterium formicicum, this protein is Probable formate transporter (fdhC).